Consider the following 123-residue polypeptide: Protein Wnt-3 (123 aa).

Serine 1 carries O-palmitoleoyl serine; by PORCN lipidation. Cysteine 89 and cysteine 104 are disulfide-bonded. A glycan (N-linked (GlcNAc...) asparagine) is linked at asparagine 90.

The protein belongs to the Wnt family. Palmitoleoylation is required for efficient binding to frizzled receptors. Depalmitoleoylation leads to Wnt signaling pathway inhibition.

The protein localises to the secreted. It is found in the extracellular space. It localises to the extracellular matrix. Its function is as follows. Ligand for members of the frizzled family of seven transmembrane receptors. Functions in the canonical Wnt signaling pathway that results in activation of transcription factors of the TCF/LEF family. Required for normal embryonic development. The chain is Protein Wnt-3 (WNT-3) from Eptatretus stoutii (Pacific hagfish).